We begin with the raw amino-acid sequence, 414 residues long: 3-isopropylmalate dehydratase large subunit (414 aa).

[4Fe-4S] cluster contacts are provided by cysteine 295, cysteine 353, and cysteine 356.

The protein belongs to the aconitase/IPM isomerase family. LeuC type 2 subfamily. In terms of assembly, heterodimer of LeuC and LeuD. Requires [4Fe-4S] cluster as cofactor.

It carries out the reaction (2R,3S)-3-isopropylmalate = (2S)-2-isopropylmalate. The protein operates within amino-acid biosynthesis; L-leucine biosynthesis; L-leucine from 3-methyl-2-oxobutanoate: step 2/4. Its function is as follows. Catalyzes the isomerization between 2-isopropylmalate and 3-isopropylmalate, via the formation of 2-isopropylmaleate. This is 3-isopropylmalate dehydratase large subunit from Pyrobaculum islandicum (strain DSM 4184 / JCM 9189 / GEO3).